Reading from the N-terminus, the 91-residue chain is Ice-structuring protein 2A7 (91 aa).

A signal peptide spans 1–21 (MALSLFTVGQLIFLFWTMRIT). Residues 22-39 (EANPDPAAKAVPAAAAPD) constitute a propeptide, removed by a dipeptidylpeptidase.

It belongs to the type-I AFP family. Detected in blood serum (at protein level).

It is found in the secreted. Contributes to protect fish blood from freezing at subzero sea water temperatures. Lowers the blood freezing point. Binds to nascent ice crystals and prevents further growth. This is Ice-structuring protein 2A7 from Pseudopleuronectes americanus (Winter flounder).